Reading from the N-terminus, the 354-residue chain is Uroporphyrinogen decarboxylase (354 aa).

Residues 27–31 (RQAGR), D77, Y154, T209, and H327 each bind substrate.

Belongs to the uroporphyrinogen decarboxylase family. As to quaternary structure, homodimer.

The protein localises to the cytoplasm. It carries out the reaction uroporphyrinogen III + 4 H(+) = coproporphyrinogen III + 4 CO2. It participates in porphyrin-containing compound metabolism; protoporphyrin-IX biosynthesis; coproporphyrinogen-III from 5-aminolevulinate: step 4/4. Catalyzes the decarboxylation of four acetate groups of uroporphyrinogen-III to yield coproporphyrinogen-III. The protein is Uroporphyrinogen decarboxylase of Shigella flexneri serotype 5b (strain 8401).